Consider the following 372-residue polypeptide: MAYHSFLVEPISCHAWNKDRTQIAICPNNHEVHIYEKSGNKWVQVHELKEHNGQVTGIDWAPDSNRIVTCGTDRNAYVWTLKGRTWKPTLVILRINRAARCVRWAPNEKKFAVGSGSRVISICYFEQENDWWVCKHIKKPIRSTVLSLDWHPNSVLLAAGSCDFKCRIFSAYIKEVEERPAPTPWGSKMPFGELMFESSSSCGWVHGVCFSANGSRVAWVSHDSTVCLADADKKMAVATLASETLPLLAVTFITESSLVAAGHDCFPVLFTYDSAAGKLSFGGRLDVPKQSSQRGLTARERFQNLDKKASSEGSAAAGAGLDSLHKNSVSQISVLSGGKAKCSQFCTTGMDGGMSIWDVRSLESALKDLKIV.

WD repeat units lie at residues 6-45 (FLVE…WVQV), 50-89 (EHNG…WKPT), 94-135 (RINR…WVCK), 140-179 (PIRS…VEER), 242-280 (SETL…GKLS), and 324-367 (LHKN…SALK).

The protein belongs to the WD repeat ARPC1 family. As to quaternary structure, component of the Arp2/3 complex composed of ACTR2/ARP2, ACTR3/ARP3, ARPC1B/p41-ARC, ARPC2/p34-ARC, ARPC3/p21-ARC, ARPC4/p20-ARC and ARPC5/p16-ARC.

Its subcellular location is the cytoplasm. It is found in the cytoskeleton. The protein resides in the nucleus. Its function is as follows. Component of the Arp2/3 complex, a multiprotein complex that mediates actin polymerization upon stimulation by nucleation-promoting factor (NPF). The Arp2/3 complex mediates the formation of branched actin networks in the cytoplasm, providing the force for cell motility. In addition to its role in the cytoplasmic cytoskeleton, the Arp2/3 complex also promotes actin polymerization in the nucleus, thereby regulating gene transcription and repair of damaged DNA. The Arp2/3 complex promotes homologous recombination (HR) repair in response to DNA damage by promoting nuclear actin polymerization, leading to drive motility of double-strand breaks (DSBs). The polypeptide is Actin-related protein 2/3 complex subunit 1B (ARPC1B) (Bos taurus (Bovine)).